The following is an 876-amino-acid chain: Leucine--tRNA ligase (876 aa).

The short motif at 42 to 52 (PYPSGKLHMGH) is the 'HIGH' region element. The 'KMSKS' region signature appears at 634–638 (KMSKS). ATP is bound at residue Lys637.

Belongs to the class-I aminoacyl-tRNA synthetase family.

It localises to the cytoplasm. The catalysed reaction is tRNA(Leu) + L-leucine + ATP = L-leucyl-tRNA(Leu) + AMP + diphosphate. The polypeptide is Leucine--tRNA ligase (Neisseria meningitidis serogroup B (strain ATCC BAA-335 / MC58)).